The sequence spans 99 residues: Probable small ribosomal subunit protein cS23 (99 aa).

It belongs to the chloroplast-specific ribosomal protein cS23 family. In terms of assembly, part of the 30S ribosomal subunit.

Functionally, probably a ribosomal protein or a ribosome-associated protein. The polypeptide is Probable small ribosomal subunit protein cS23 (Synechococcus sp. (strain JA-3-3Ab) (Cyanobacteria bacterium Yellowstone A-Prime)).